Consider the following 255-residue polypeptide: Glutamate racemase (255 aa).

Substrate contacts are provided by residues 7–8 (DS) and 39–40 (YG). Cys70 serves as the catalytic Proton donor/acceptor. Residue 71 to 72 (NT) coordinates substrate. Cys181 acts as the Proton donor/acceptor in catalysis. 182-183 (TH) is a binding site for substrate.

The protein belongs to the aspartate/glutamate racemases family.

It carries out the reaction L-glutamate = D-glutamate. It participates in cell wall biogenesis; peptidoglycan biosynthesis. Provides the (R)-glutamate required for cell wall biosynthesis. This Helicobacter acinonychis (strain Sheeba) protein is Glutamate racemase.